We begin with the raw amino-acid sequence, 469 residues long: MTLLTASSRAAARLLGAKNSSCIIFAARHASTSTNLKDVLANMIPKEQARIKSFRQQYGSTVIGQITVDMLYGGMRGMKGLIYETSVLDPDEGIRFRGYSIPECQKLLPKAPGGAEPLPEGLFWLLVTGEIPSQEQVNWVSREWAKRAALPSHVVTMLDNFPTNLHPMSQLSAAVTALNSESTFARAYSEGISRTKYWEFIYEDSMDLIAKLPCIAAKIYRNLYREGSSIGAIDPALDWSHNFTNMLGYTDTQFIELMRLYLTIHSDHEGGNVSAHTSHLVGSALSDPYLAFAAAMNGLAGPLHGLANQEVLVWLTNLQKELGEDVSDQKLRDFIWNTLNSGRVVPGYGHAVLRKTDPRYTCQREFALKHLPKDPLFKLVAQLYKIVPNVLLEQGKAKNPWPNVDAHSGVLLQYYGMKEMNYYTVLFGVSRALGVLSQLIWSRALGFPLERPKSMSTDGLMVLVGAKSV.

Residues 1–31 (MTLLTASSRAAARLLGAKNSSCIIFAARHAS) constitute a mitochondrion transit peptide. Active-site residues include histidine 304 and histidine 350. Arginine 359 provides a ligand contact to oxaloacetate. Aspartate 405 is a catalytic residue. Residues arginine 431 and arginine 451 each contribute to the oxaloacetate site.

This sequence belongs to the citrate synthase family. In terms of assembly, homodimer.

The protein localises to the mitochondrion matrix. It catalyses the reaction oxaloacetate + acetyl-CoA + H2O = citrate + CoA + H(+). It participates in carbohydrate metabolism; tricarboxylic acid cycle; isocitrate from oxaloacetate: step 1/2. Functionally, key enzyme of the Krebs tricarboxylic acid cycle which catalyzes the synthesis of citrate from acetyl coenzyme A and oxaloacetate. The polypeptide is Citrate synthase, mitochondrial (CS) (Amblyrhynchus cristatus (Galapagos marine iguana)).